Here is a 272-residue protein sequence, read N- to C-terminus: NH(3)-dependent NAD(+) synthetase (272 aa).

45-52 (GISGGQDS) lines the ATP pocket. Asp-51 is a binding site for Mg(2+). Deamido-NAD(+) is bound at residue Arg-138. Thr-158 lines the ATP pocket. Glu-163 is a binding site for Mg(2+). The deamido-NAD(+) site is built by Lys-171 and Asp-178. Lys-187 and Thr-209 together coordinate ATP. A deamido-NAD(+)-binding site is contributed by 258-259 (HK).

This sequence belongs to the NAD synthetase family. As to quaternary structure, homodimer.

The enzyme catalyses deamido-NAD(+) + NH4(+) + ATP = AMP + diphosphate + NAD(+) + H(+). The protein operates within cofactor biosynthesis; NAD(+) biosynthesis; NAD(+) from deamido-NAD(+) (ammonia route): step 1/1. Functionally, catalyzes the ATP-dependent amidation of deamido-NAD to form NAD. Uses ammonia as a nitrogen source. This chain is NH(3)-dependent NAD(+) synthetase, found in Bacillus cereus (strain ATCC 14579 / DSM 31 / CCUG 7414 / JCM 2152 / NBRC 15305 / NCIMB 9373 / NCTC 2599 / NRRL B-3711).